The sequence spans 157 residues: Endoribonuclease YbeY (157 aa).

His123, His127, and His133 together coordinate Zn(2+).

The protein belongs to the endoribonuclease YbeY family. Zn(2+) is required as a cofactor.

It localises to the cytoplasm. Functionally, single strand-specific metallo-endoribonuclease involved in late-stage 70S ribosome quality control and in maturation of the 3' terminus of the 16S rRNA. In Limosilactobacillus fermentum (strain NBRC 3956 / LMG 18251) (Lactobacillus fermentum), this protein is Endoribonuclease YbeY.